A 200-amino-acid polypeptide reads, in one-letter code: Ribosomal RNA large subunit methyltransferase E (200 aa).

S-adenosyl-L-methionine-binding residues include Gly-49, Trp-51, Asp-69, Asp-87, and Asp-111. The Proton acceptor role is filled by Lys-151.

This sequence belongs to the class I-like SAM-binding methyltransferase superfamily. RNA methyltransferase RlmE family.

It localises to the cytoplasm. The enzyme catalyses uridine(2552) in 23S rRNA + S-adenosyl-L-methionine = 2'-O-methyluridine(2552) in 23S rRNA + S-adenosyl-L-homocysteine + H(+). Its function is as follows. Specifically methylates the uridine in position 2552 of 23S rRNA at the 2'-O position of the ribose in the fully assembled 50S ribosomal subunit. The chain is Ribosomal RNA large subunit methyltransferase E from Lawsonia intracellularis (strain PHE/MN1-00).